A 205-amino-acid chain; its full sequence is N-(5'-phosphoribosyl)anthranilate isomerase (205 aa).

Belongs to the TrpF family.

The enzyme catalyses N-(5-phospho-beta-D-ribosyl)anthranilate = 1-(2-carboxyphenylamino)-1-deoxy-D-ribulose 5-phosphate. Its pathway is amino-acid biosynthesis; L-tryptophan biosynthesis; L-tryptophan from chorismate: step 3/5. This is N-(5'-phosphoribosyl)anthranilate isomerase from Thermotoga neapolitana (strain ATCC 49049 / DSM 4359 / NBRC 107923 / NS-E).